The primary structure comprises 615 residues: MTTLDSNNNTGGVITYIGSSGSSPSRTSPESLYSDSSNGSFQSLTQGCPTYFPPSPTGSLTQDPARSFGTVPPSLSDDSSPSSASSSSSSSSSSFYNGSPPGSLQVAMEDSSRVSPSKGTSNITKLNGMVLLCKVCGDVASGFHYGVHACEGCKGFFRRSIQQNIQYKRCLKNENCSIVRINRNRCQQCRFKKCLSVGMSRDAVRFGRIPKREKQRMLAEMQNAMNLANNQLSSLCPLETSPAPHPTSGSVGPSPPPAPAPTPLVGFSQFPQQLTPPRSPSPEPTVEDVISQVARAHREIFTYAHDKLGTSPGNFNANHASGSPPATTPQCWESQGCPSTPNDNNLLAAQRHNEALNGLRQGPSSYPPTWPSGPAHHSCHQPNSNGHRLCPTHVYSAPEGKAPANGLRQGNTKNVLLACPMNMYPHGRSGRTVQEIWEDFSMSFTPAVREVVEFAKHIPGFRDLSQHDQVTLLKAGTFEVLMVRFASLFNVKDQTVMFLSRTTYSLQELGAMGMGDLLNAMFDFSEKLNSLALTEEELGLFTAVVLVSADRSGMENSASVEQLQKTLLRALRALVLKNRPSETSRFTKLLLKLPDLRTLNNMHSEKLLSFRVDAQ.

Polar residues predominate over residues 1-12 (MTTLDSNNNTGG). Positions 1-70 (MTTLDSNNNT…TQDPARSFGT (70 aa)) are required for phosphorylation by CSNK1E and cytoplasmic localization. Residues 1–120 (MTTLDSNNNT…SSRVSPSKGT (120 aa)) are disordered. The modulating stretch occupies residues 1–129 (MTTLDSNNNT…TSNITKLNGM (129 aa)). Positions 14 to 34 (ITYIGSSGSSPSRTSPESLYS) are enriched in low complexity. The segment covering 35-48 (DSSNGSFQSLTQGC) has biased composition (polar residues). The interval 49 to 285 (PTYFPPSPTG…PPRSPSPEPT (237 aa)) is crucial for activation of GJA1. Serine 55 and serine 59 each carry phosphoserine; by GSK3-beta. Residues 72–103 (PPSLSDDSSPSSASSSSSSSSSSFYNGSPPGS) are compositionally biased toward low complexity. The segment at residues 130–206 (VLLCKVCGDV…VGMSRDAVRF (77 aa)) is a DNA-binding region (nuclear receptor). NR C4-type zinc fingers lie at residues 133 to 153 (CKVCGDVASGFHYGVHACEGC) and 170 to 194 (CLKNENCSIVRINRNRCQQCRFKKC). Residues lysine 192 and lysine 193 each carry the N6-acetyllysine; by KAT5 modification. Disordered stretches follow at residues 235–287 (LCPL…PTVE), 312–337 (PGNFNANHASGSPPATTPQCWESQGC), and 357–385 (NGLRQGPSSYPPTWPSGPAHHSCHQPNSN). Positions 253-262 (PSPPPAPAPT) are enriched in pro residues. At threonine 275 the chain carries Phosphothreonine; by CDK1. Residues 285 to 615 (TVEDVISQVA…KLLSFRVDAQ (331 aa)) form the NR LBD domain. Lysine 401 carries the post-translational modification N6-acetyllysine. Cysteine 419 contacts heme. Position 592 is an N6-acetyllysine (lysine 592). Histidine 603 contacts heme.

Belongs to the nuclear hormone receptor family. NR1 subfamily. In terms of assembly, binds DNA as a monomer or a homodimer. Interacts with C1D, NR2E3, SP1 and ZNHIT1. Interacts with OPHN1 (via C-terminus). Interacts with PER2; the interaction associates PER2 to BMAL1 promoter region. Interacts with CRY1. Interacts with CCAR2. Interacts with SIAH2. Interacts with FBXW7 and CDK1. Interacts with HUWE1. Interacts with NR0B2. Interacts with NFIL3. Interacts (via domain NR LBD) with HSP90AA1 and HSP90AB1. In terms of processing, ubiquitinated, leading to its proteasomal degradation. Ubiquitinated by the SCF(FBXW7) complex when phosphorylated by CDK1 leading to its proteasomal degradation. Ubiquitinated by SIAH2; leading to its proteasomal degradation. Rapidly ubiquitinated in response to inflammatory triggers and sumoylation is a prerequisite to its ubiquitination. Post-translationally, sumoylated by UBE2I, desumoylated by SENP1, and sumoylation is a prerequisite to its ubiquitination. Phosphorylated by CSNK1E; phosphorylation enhances its cytoplasmic localization. In terms of processing, undergoes lysosome-mediated degradation in a time-dependent manner in the liver.

It localises to the nucleus. The protein localises to the cytoplasm. The protein resides in the cell projection. Its subcellular location is the dendrite. It is found in the dendritic spine. Functionally, transcriptional repressor which coordinates circadian rhythm and metabolic pathways in a heme-dependent manner. Integral component of the complex transcription machinery that governs circadian rhythmicity and forms a critical negative limb of the circadian clock by directly repressing the expression of core clock components BMAL1, CLOCK and CRY1. Also regulates genes involved in metabolic functions, including lipid and bile acid metabolism, adipogenesis, gluconeogenesis and the macrophage inflammatory response. Acts as a receptor for heme which stimulates its interaction with the NCOR1/HDAC3 corepressor complex, enhancing transcriptional repression. Recognizes two classes of DNA response elements within the promoter of its target genes and can bind to DNA as either monomers or homodimers, depending on the nature of the response element. Binds as a monomer to a response element composed of the consensus half-site motif 5'-[A/G]GGTCA-3' preceded by an A/T-rich 5' sequence (RevRE), or as a homodimer to a direct repeat of the core motif spaced by two nucleotides (RevDR-2). Acts as a potent competitive repressor of ROR alpha (RORA) function and regulates the levels of its ligand heme by repressing the expression of PPARGC1A, a potent inducer of heme synthesis. Regulates lipid metabolism by repressing the expression of APOC3 and by influencing the activity of sterol response element binding proteins (SREBPs); represses INSIG2 which interferes with the proteolytic activation of SREBPs which in turn govern the rhythmic expression of enzymes with key functions in sterol and fatty acid synthesis. Regulates gluconeogenesis via repression of G6PC1 and PEPCK and adipocyte differentiation via repression of PPARG. Regulates glucagon release in pancreatic alpha-cells via the AMPK-NAMPT-SIRT1 pathway and the proliferation, glucose-induced insulin secretion and expression of key lipogenic genes in pancreatic-beta cells. Positively regulates bile acid synthesis by increasing hepatic expression of CYP7A1 via repression of NR0B2 and NFIL3 which are negative regulators of CYP7A1. Modulates skeletal muscle oxidative capacity by regulating mitochondrial biogenesis and autophagy; controls mitochondrial biogenesis and respiration by interfering with the STK11-PRKAA1/2-SIRT1-PPARGC1A signaling pathway. Represses the expression of SERPINE1/PAI1, an important modulator of cardiovascular disease and the expression of inflammatory cytokines and chemokines in macrophages. Represses gene expression at a distance in macrophages by inhibiting the transcription of enhancer-derived RNAs (eRNAs). Plays a role in the circadian regulation of body temperature and negatively regulates thermogenic transcriptional programs in brown adipose tissue (BAT); imposes a circadian oscillation in BAT activity, increasing body temperature when awake and depressing thermogenesis during sleep. In concert with NR2E3, regulates transcriptional networks critical for photoreceptor development and function. In addition to its activity as a repressor, can also act as a transcriptional activator. In the ovarian granulosa cells acts as a transcriptional activator of STAR which plays a role in steroid biosynthesis. In collaboration with SP1, activates GJA1 transcription in a heme-independent manner. Represses the transcription of CYP2B10, CYP4A10 and CYP4A14. Represses the transcription of CES2. Represses and regulates the circadian expression of TSHB in a NCOR1-dependent manner. Negatively regulates the protein stability of NR3C1 and influences the time-dependent subcellular distribution of NR3C1, thereby affecting its transcriptional regulatory activity. Plays a critical role in the circadian control of neutrophilic inflammation in the lung; under resting, non-stress conditions, acts as a rhythmic repressor to limit inflammatory activity whereas in the presence of inflammatory triggers undergoes ubiquitin-mediated degradation thereby relieving inhibition of the inflammatory response. Plays a key role in the circadian regulation of microglial activation and neuroinflammation; suppresses microglial activation through the NF-kappaB pathway in the central nervous system. Plays a role in the regulation of the diurnal rhythms of lipid and protein metabolism in the skeletal muscle via transcriptional repression of genes controlling lipid and amino acid metabolism in the muscle. In Rattus norvegicus (Rat), this protein is Nuclear receptor subfamily 1 group D member 1 (Nr1d1).